The following is a 69-amino-acid chain: Small integral membrane protein 20 (69 aa).

The Mitochondrial matrix portion of the chain corresponds to 1–8 (MAAARNLR). A helical membrane pass occupies residues 9-29 (TALIFGGFISMVGAAFYPIYF). Over 30–69 (RPLLRLEEYQKEQAVNRAGIVQEDVQPPGLKVWSDPFGRK) the chain is Mitochondrial intermembrane. Phe66 is subject to Phenylalanine amide.

As to quaternary structure, component of the MITRAC (mitochondrial translation regulation assembly intermediate of cytochrome c oxidase complex) complex, the core components of this complex being Coa3/Mitrac12 and Cox14. Interacts with Coa3/Mitrac12 and Cox4i1. Directly interacts with newly synthesized Mt-Co1/Cox1. As to expression, highly expressed in the hypothalamus, substantia nigra reticulata, Edinger-Westphal nucleus, and nucleus of the solitary tract/dorsal motor nucleus of the vagus, the spinal cord, and sensory ganglia (at protein level). Also expressed in the heart, thymus, esophagus, stomach, spleen, lung, pituitary gland, kidney, jejunum, duodenum, ileum, cerebrum, pons, and colon (at protein level). Expressed in preadipocytes and apidocytes (at protein level). Expressed in pancreatic islet cells (at protein level).

The protein localises to the mitochondrion inner membrane. The protein resides in the secreted. Component of the MITRAC (mitochondrial translation regulation assembly intermediate of cytochrome c oxidase complex) complex, that regulates cytochrome c oxidase assembly. Promotes the progression of complex assembly after the association of Mt-Co1/Cox11 with Cox4I1 and Cox6c. Chaperone-like assembly factor required to stabilize newly synthesized Mt-Co1/Cox1 and to prevent its premature turnover. In terms of biological role, peptide involved in a broad spectrum of regulatory functions. Is a ligand for GPR173. As part of the reproductive cycle, it regulates gonadotropin-releasing hormone (GnRH) signaling in the hypothalamus and pituitary gland which augments the release of luteinizing hormone. More specifically, it regulates the expression of transcription factors CEBPB and POU2F1/OCT1 through the cAMP-PKA signaling pathway, which subsequently regulate the expression of GNRHR and KISS1. Plays a protective role in memory retention through activation of GNRHR. Regulates the secretion of AVP by hypothalamic neurons. Plays a role in the transduction of the itch sensation. Induces anxiolytic effects, reducing behavior associated with anxiety. Regulates food intake as well as satiation and satiety by increasing NUCB2 expression in neurons. In the ovary, it regulates follicular growth by stimulating granulosa cell proliferation by increasing the expression of GPR173, CREB1, CYP19A1, KITLG, FSHR, and LHCGR. It also increases the production of estradiol (E2). In the heart, it regulates contractility and relaxation by activating the AKT1-NOS3 and MAPK1-MAPK3 signaling pathways. It also plays a cardioprotective role during ischemia, where it activates the SAFE and RISK pathways. Stimulates the proliferation and differentiation of preadipocytes. In pancreatic islet cells, it induces proliferation of islet cells as well as the production of INS1 and INS2 through activation of the MAPK1-MAPK3 signaling pathways. The chain is Small integral membrane protein 20 from Rattus norvegicus (Rat).